The chain runs to 114 residues: Prefoldin subunit 6 (114 aa).

Ser2 bears the N-acetylserine mark.

It belongs to the prefoldin subunit beta family. As to quaternary structure, heterohexamer of two PFD-alpha type and four PFD-beta type subunits.

It is found in the nucleus. Its function is as follows. Binds specifically to cytosolic chaperonin (c-CPN) and transfers target proteins to it. Binds to nascent polypeptide chain and promotes folding in an environment in which there are many competing pathways for nonnative proteins. In Saccharomyces cerevisiae (strain ATCC 204508 / S288c) (Baker's yeast), this protein is Prefoldin subunit 6 (YKE2).